A 97-amino-acid polypeptide reads, in one-letter code: Integration host factor subunit alpha (97 aa).

The protein belongs to the bacterial histone-like protein family. As to quaternary structure, heterodimer of an alpha and a beta chain.

In terms of biological role, this protein is one of the two subunits of integration host factor, a specific DNA-binding protein that functions in genetic recombination as well as in transcriptional and translational control. The protein is Integration host factor subunit alpha of Colwellia psychrerythraea (strain 34H / ATCC BAA-681) (Vibrio psychroerythus).